A 190-amino-acid chain; its full sequence is Heme-binding protein 1 (190 aa).

The protein belongs to the HEBP family. As to quaternary structure, monomer. Ubiquitously expressed. Extremely abundant in liver.

It is found in the cytoplasm. May bind free porphyrinogens that may be present in the cell and thus facilitate removal of these potentially toxic compound. Binds with a high affinity to one molecule of heme or porphyrins. It binds metalloporphyrins, free porphyrins and N-methylprotoporphyrin with similar affinities. This is Heme-binding protein 1 (Hebp1) from Mus musculus (Mouse).